Here is a 206-residue protein sequence, read N- to C-terminus: Ribosomal RNA small subunit methyltransferase G (206 aa).

S-adenosyl-L-methionine is bound by residues G74, L79, 125 to 126, and R140; that span reads VE.

It belongs to the methyltransferase superfamily. RNA methyltransferase RsmG family.

Its subcellular location is the cytoplasm. The catalysed reaction is guanosine(527) in 16S rRNA + S-adenosyl-L-methionine = N(7)-methylguanosine(527) in 16S rRNA + S-adenosyl-L-homocysteine. Functionally, specifically methylates the N7 position of guanine in position 527 of 16S rRNA. The protein is Ribosomal RNA small subunit methyltransferase G of Shewanella sp. (strain MR-7).